The chain runs to 144 residues: Protein cornichon homolog 1 (144 aa).

Topologically, residues 1 to 10 (MAFTFAAFCY) are cytoplasmic. Residues 11 to 31 (MLALLLTAALIFFAIWHIIAF) traverse the membrane as a helical segment. The Lumenal segment spans residues 32 to 56 (DELKTDYKNPIDQCNTLNPLVLPEY). A helical transmembrane segment spans residues 57 to 77 (LIHAFFCVMFLCAAEWLTLGL). Topologically, residues 78 to 122 (NMPLLAYHIWRYMSRPVMSGPGLYDPTTIMNADILAYCQKEGWCK) are cytoplasmic. The helical transmembrane segment at 123–143 (LAFYLLAFFYYLYGMIYVLVS) threads the bilayer. A topological domain (lumenal) is located at residue S144.

This sequence belongs to the cornichon family. In terms of assembly, interacts with AREG immature precursor and with immature TGFA, i.e. with a prosegment and lacking full N-glycosylation, but not with the fully N-glycosylated form. In the Golgi apparatus, may form a complex with GORASP55 and transmembrane TGFA.

It localises to the endoplasmic reticulum membrane. It is found in the golgi apparatus membrane. In terms of biological role, involved in the selective transport and maturation of TGF-alpha family proteins. The polypeptide is Protein cornichon homolog 1 (CNIH1) (Bos taurus (Bovine)).